An 841-amino-acid polypeptide reads, in one-letter code: Transcription regulator protein BACH2 (841 aa).

The BTB domain occupies 37 to 103 (CDVTLIVERK…AYTAKLLLSR (67 aa)). 3 disordered regions span residues 153 to 173 (HEDCENSAGEEEDEEEETMDS), 204 to 226 (EALLPEPDVPTDTKESSEKDALT), and 246 to 329 (SSHS…AACL). The segment covering 160–172 (AGEEEDEEEETMD) has biased composition (acidic residues). 2 stretches are compositionally biased toward basic and acidic residues: residues 214–224 (TDTKESSEKDA) and 298–313 (PDAKDRAGDVEMDRKQ). Position 315 is a phosphoserine (Ser-315). Glycyl lysine isopeptide (Lys-Gly) (interchain with G-Cter in SUMO2) cross-links involve residues Lys-382 and Lys-421. Ser-521 carries the phosphoserine; by RPS6KB1 modification. The interval 583 to 610 (QSYGTNSSDESGSFSEADSESCPVQDRG) is disordered. The span at 584 to 598 (SYGTNSSDESGSFSE) shows a compositional bias: polar residues. Residues 646 to 709 (FIHDVRRRSK…GELLDNFSCL (64 aa)) form the bZIP domain. The segment at 651 to 667 (RRRSKNRIAAQRCRKRK) is basic motif. Positions 671-678 (IQNLECEI) are leucine-zipper. The tract at residues 777-816 (PGPPWAPSNTSENCTSGRRLEGTDPGTFSERGPPLEPRSQ) is disordered. Residues 821 to 841 (DFCQEMTDKCTTDEQPRKDYT) carry the Nuclear export signal motif.

The protein belongs to the bZIP family. CNC subfamily. Homodimer; disulfide-linked. Heterodimer of BACH2 and Maf-related transcription factors. Post-translationally, phosphorylation at Ser-521 downstream of the PI-3K pathway promotes nuclear export. In terms of processing, the reversible disulfide bond may provide a mechanism to regulate the activity in oxidative stress responses. As to expression, B-cell specific.

The protein resides in the cytoplasm. Its subcellular location is the nucleus. In terms of biological role, transcriptional regulator that acts as a repressor or activator. Binds to Maf recognition elements (MARE). Plays an important role in coordinating transcription activation and repression by MAFK. Induces apoptosis in response to oxidative stress through repression of the antiapoptotic factor HMOX1. Positively regulates the nuclear import of actin. Is a key regulator of adaptive immunity, crucial for the maintenance of regulatory T-cell function and B-cell maturation. In Homo sapiens (Human), this protein is Transcription regulator protein BACH2 (BACH2).